The chain runs to 60 residues: Large ribosomal subunit protein uL30 (60 aa).

It belongs to the universal ribosomal protein uL30 family. In terms of assembly, part of the 50S ribosomal subunit.

The polypeptide is Large ribosomal subunit protein uL30 (Bacillus mycoides (strain KBAB4) (Bacillus weihenstephanensis)).